Consider the following 122-residue polypeptide: Acidic phospholipase A2 CbIalpha (122 aa).

7 cysteine pairs are disulfide-bonded: Cys26–Cys115, Cys28–Cys44, Cys43–Cys95, Cys49–Cys122, Cys50–Cys88, Cys57–Cys81, and Cys75–Cys86. Ca(2+) contacts are provided by Tyr27, Gly29, and Gly31. His47 is a catalytic residue. Asp48 is a binding site for Ca(2+). Asp89 is a catalytic residue.

The protein belongs to the phospholipase A2 family. Group II subfamily. D49 sub-subfamily. Heterodimer of an acidic subunit (CbIalpha or CbIbeta) and a basic subunit (CbII). The acidic subunit is non-toxic, and increases the toxicity of the basic subunit. Requires Ca(2+) as cofactor. In terms of tissue distribution, expressed by the venom gland.

Its subcellular location is the secreted. The enzyme catalyses a 1,2-diacyl-sn-glycero-3-phosphocholine + H2O = a 1-acyl-sn-glycero-3-phosphocholine + a fatty acid + H(+). In terms of biological role, heterodimer: presynaptic neurotoxin. Monomer: Snake venom phospholipase A2 (PLA2) is inactive towards micellar phosphatidylcholine but is weakly active towards non-micellar dithiolecithin. PLA2 catalyzes the calcium-dependent hydrolysis of the 2-acyl groups in 3-sn-phosphoglycerides. The sequence is that of Acidic phospholipase A2 CbIalpha from Pseudocerastes fieldi (Field's horned viper).